The chain runs to 235 residues: Modulator of macroautophagy TMEM150B (235 aa).

At 1–8 the chain is on the cytoplasmic side; it reads MWGYLSLL. Residues 9 to 29 traverse the membrane as a helical segment; sequence PMCLAFWAIAGIWTVFSLAVV. Residues 30–51 lie on the Extracellular side of the membrane; sequence NKAVNLTDGFPYISVCGNVPPQ. N34 carries N-linked (GlcNAc...) asparagine glycosylation. The helical transmembrane segment at 52–72 threads the bilayer; that stretch reads SCIFSQVLNIGAASAAWICIL. At 73 to 88 the chain is on the cytoplasmic side; sequence RYYQLRDWGVRKWHNQ. A helical transmembrane segment spans residues 89 to 109; it reads VILWTGLLCALGTSIVGNFQE. Residues 110 to 116 lie on the Extracellular side of the membrane; it reads KNQRATH. A helical membrane pass occupies residues 117–137; that stretch reads LTGAFLAFFVGIVYFWLQLFL. Residues 138-156 lie on the Cytoplasmic side of the membrane; it reads SWRMKNLPQPGAPWIGPLR. The helical transmembrane segment at 157-177 threads the bilayer; it reads LVLCSACFILEVAMVVLHSWS. The Extracellular portion of the chain corresponds to 178–180; sequence MRS. A helical membrane pass occupies residues 181–201; sequence VSAICEWVAAMLLFILFGLLA. The Cytoplasmic portion of the chain corresponds to 202-235; sequence VDFSRLDSCTLCLQPGSGSLRPPPDSPTSLHVQL.

It belongs to the DRAM/TMEM150 family.

It localises to the cell membrane. The protein resides in the endosome membrane. It is found in the cytoplasmic vesicle. The protein localises to the autophagosome membrane. Modulator of macroautophagy that causes accumulation of autophagosomes under basal conditions and enhances autophagic flux. Represses cell death and promotes long-term clonogenic survival of cells grown in the absence of glucose in a macroautophagy-independent manner. May have some role in extracellular matrix engulfment or growth factor receptor recycling, both of which can modulate cell survival. The protein is Modulator of macroautophagy TMEM150B of Bos taurus (Bovine).